The chain runs to 984 residues: Ephrin type-B receptor 1 (984 aa).

An Eph LBD domain is found at 1–182 (ETLMDTRTAT…FFKKCPSVVQ (182 aa)). The Extracellular portion of the chain corresponds to 1–541 (ETLMDTRTAT…KSELREQLPL (541 aa)). Fibronectin type-III domains are found at residues 303–413 (VPSG…TNQA) and 414–528 (APST…TLTD). Asparagine 315, asparagine 407, and asparagine 480 each carry an N-linked (GlcNAc...) asparagine glycan. A helical transmembrane segment spans residues 542–562 (IAGSAAAGVVFIVSLVAISIV). Residues 563–984 (CSRKRAYSKE…QMSQSPTSMA (422 aa)) lie on the Cytoplasmic side of the membrane. The Protein kinase domain occupies 619-882 (VKIEEVIGAG…EIVNTLDKMI (264 aa)). ATP-binding positions include 625–633 (IGAGEFGEV) and lysine 651. The Proton acceptor role is filled by aspartate 744. One can recognise an SAM domain in the interval 911-975 (TAFTSVEDWL…LNSIQSMRVQ (65 aa)). The short motif at 982-984 (SMA) is the PDZ-binding element.

It belongs to the protein kinase superfamily. Tyr protein kinase family. Ephrin receptor subfamily. Heterotetramer upon binding of the ligand. The heterotetramer is composed of an ephrin dimer and a receptor dimer. Oligomerization is probably required to induce biological responses. In terms of processing, phosphorylated. Autophosphorylation is stimulated by ligands. Expressed at high levels in the 10-day embryo, and in adult brain, lung, heart and skeletal muscle. Low levels of expression detected in all other adult tissues tested.

Its subcellular location is the cell membrane. The protein resides in the early endosome membrane. It is found in the cell projection. It localises to the dendrite. It carries out the reaction L-tyrosyl-[protein] + ATP = O-phospho-L-tyrosyl-[protein] + ADP + H(+). Receptor tyrosine kinase which binds promiscuously transmembrane ephrin-B family ligands residing on adjacent cells, leading to contact-dependent bidirectional signaling into neighboring cells. The signaling pathway downstream of the receptor is referred to as forward signaling while the signaling pathway downstream of the ephrin ligand is referred to as reverse signaling. May play a role in axon guidance during nervous system development. May also play an important redundant role with other ephrin-B receptors in development and maturation of dendritic spines and synapse formation. More generally, may play a role in targeted cell migration and adhesion. Upon activation by ephrin-B ligands activates the MAPK/ERK and the JNK signaling cascades to regulate cell migration and adhesion respectively. The protein is Ephrin type-B receptor 1 (EPHB1) of Gallus gallus (Chicken).